Reading from the N-terminus, the 165-residue chain is Pyruvoyl-dependent arginine decarboxylase (165 aa).

A Pyruvic acid (Ser) modification is found at Ser-53.

Belongs to the PdaD family. Requires pyruvate as cofactor.

It carries out the reaction L-arginine + H(+) = agmatine + CO2. In Methanococcus aeolicus (strain ATCC BAA-1280 / DSM 17508 / OCM 812 / Nankai-3), this protein is Pyruvoyl-dependent arginine decarboxylase.